The following is a 30-amino-acid chain: Cyclotide hyen-G (30 aa).

Positions 1 to 30 form a cross-link, cyclopeptide (Gly-Asp); that stretch reads GLPCGESCVYIPCISTVLGCSCSNKVCYRD. Cystine bridges form between C4–C20, C8–C22, and C13–C27.

In terms of processing, this is a cyclic peptide. Detected in stems (at protein level).

Its function is as follows. Probably participates in a plant defense mechanism. This is Cyclotide hyen-G from Pigea enneasperma (Spade flower).